The chain runs to 432 residues: Adenylosuccinate synthetase (432 aa).

GTP-binding positions include 13-19 (GDEGKGK) and 41-43 (GHT). Catalysis depends on Asp-14, which acts as the Proton acceptor. Mg(2+) contacts are provided by Asp-14 and Gly-41. IMP-binding positions include 14–17 (DEGK), 39–42 (NAGH), Thr-130, Arg-144, Gln-225, Thr-240, and Arg-304. Catalysis depends on His-42, which acts as the Proton donor. 300-306 (AVTGRPR) is a substrate binding site. Residues Arg-306, 332–334 (KLD), and 415–417 (STG) contribute to the GTP site.

It belongs to the adenylosuccinate synthetase family. In terms of assembly, homodimer. Mg(2+) is required as a cofactor.

It localises to the cytoplasm. It catalyses the reaction IMP + L-aspartate + GTP = N(6)-(1,2-dicarboxyethyl)-AMP + GDP + phosphate + 2 H(+). It functions in the pathway purine metabolism; AMP biosynthesis via de novo pathway; AMP from IMP: step 1/2. In terms of biological role, plays an important role in the de novo pathway of purine nucleotide biosynthesis. Catalyzes the first committed step in the biosynthesis of AMP from IMP. The polypeptide is Adenylosuccinate synthetase (Actinobacillus pleuropneumoniae serotype 7 (strain AP76)).